The chain runs to 355 residues: Cyclic nucleotide-gated potassium channel mll3241 (355 aa).

At 1-12 (MSVLPFLRIYAP) the chain is on the cytoplasmic side. A helical membrane pass occupies residues 13-30 (LNAVLAAPGLLAVAALTI). Residues 31–38 (PDMSGRSR) are Periplasmic-facing. A helical transmembrane segment spans residues 39–61 (LALAALLAVIWGAYLLQLAATLL). At 62–74 (KRRAGVVRDRTPK) the chain is on the cytoplasmic side. Residues 75–94 (IAIDVLAVLVPLAAFLLDGS) form a helical membrane-spanning segment. Residues 95–112 (PDWSLYCAVWLLKPLRDS) traverse the membrane as a helical segment. Over 113-129 (TFFPVLGRVLANEARNL) the chain is Cytoplasmic. A helical transmembrane segment spans residues 130–150 (IGVTTLFGVVLFAVALAAYVI). The Periplasmic portion of the chain corresponds to 151–161 (ERDIQPEKFGS). Positions 162-180 (IPQAMWWAVVTLSTTGYGD) form an intramembrane region, pore-forming. A Selectivity filter motif is present at residues 175-180 (TTGYGD). Residues 181 to 185 (TIPQS) lie on the Periplasmic side of the membrane. A helical transmembrane segment spans residues 186 to 210 (FAGRVLAGAVMMSGIGIFGLWAGIL). Over 211–355 (ATGFYQEVRR…LERRGAAASA (145 aa)) the chain is Cytoplasmic. Residues 297 to 298 (GE), 307 to 308 (RS), and arginine 348 each bind 3',5'-cyclic AMP.

The protein belongs to the potassium channel family. In terms of assembly, homotetramer.

The protein localises to the cell membrane. Its function is as follows. Cyclic nucleotide-regulated potassium channel activated by cAMP. The sequence is that of Cyclic nucleotide-gated potassium channel mll3241 from Mesorhizobium japonicum (strain LMG 29417 / CECT 9101 / MAFF 303099) (Mesorhizobium loti (strain MAFF 303099)).